A 112-amino-acid chain; its full sequence is Small ribosomal subunit protein bS6 (112 aa).

The protein belongs to the bacterial ribosomal protein bS6 family.

In terms of biological role, binds together with bS18 to 16S ribosomal RNA. The sequence is that of Small ribosomal subunit protein bS6 from Christiangramia forsetii (strain DSM 17595 / CGMCC 1.15422 / KT0803) (Gramella forsetii).